A 55-amino-acid polypeptide reads, in one-letter code: ATP synthase protein 8 (55 aa).

Residues 4-24 traverse the membrane as a helical segment; the sequence is LDPAPWFSMLTVSWLIIFLLI.

The protein belongs to the ATPase protein 8 family. In terms of assembly, F-type ATPases have 2 components, CF(1) - the catalytic core - and CF(0) - the membrane proton channel.

The protein resides in the mitochondrion membrane. Its function is as follows. Mitochondrial membrane ATP synthase (F(1)F(0) ATP synthase or Complex V) produces ATP from ADP in the presence of a proton gradient across the membrane which is generated by electron transport complexes of the respiratory chain. F-type ATPases consist of two structural domains, F(1) - containing the extramembraneous catalytic core and F(0) - containing the membrane proton channel, linked together by a central stalk and a peripheral stalk. During catalysis, ATP synthesis in the catalytic domain of F(1) is coupled via a rotary mechanism of the central stalk subunits to proton translocation. Part of the complex F(0) domain. Minor subunit located with subunit a in the membrane. This Petromyzon marinus (Sea lamprey) protein is ATP synthase protein 8 (MT-ATP8).